We begin with the raw amino-acid sequence, 224 residues long: UPF0758 protein NE1464 (224 aa).

Residues 102 to 224 (IMDSPQSVRN…VVSFAERGLI (123 aa)) enclose the MPN domain. 3 residues coordinate Zn(2+): His173, His175, and Asp186. The JAMM motif motif lies at 173–186 (HNHPSGIAEPSTAD).

It belongs to the UPF0758 family.

The chain is UPF0758 protein NE1464 from Nitrosomonas europaea (strain ATCC 19718 / CIP 103999 / KCTC 2705 / NBRC 14298).